Consider the following 90-residue polypeptide: Probable Fe(2+)-trafficking protein (90 aa).

The protein belongs to the Fe(2+)-trafficking protein family.

Functionally, could be a mediator in iron transactions between iron acquisition and iron-requiring processes, such as synthesis and/or repair of Fe-S clusters in biosynthetic enzymes. This Aliivibrio salmonicida (strain LFI1238) (Vibrio salmonicida (strain LFI1238)) protein is Probable Fe(2+)-trafficking protein.